Reading from the N-terminus, the 433-residue chain is Enolase (433 aa).

(2R)-2-phosphoglycerate is bound at residue glutamine 164. Glutamate 206 serves as the catalytic Proton donor. 3 residues coordinate Mg(2+): aspartate 243, glutamate 289, and aspartate 316. Residues lysine 341, arginine 370, serine 371, and lysine 392 each coordinate (2R)-2-phosphoglycerate. Catalysis depends on lysine 341, which acts as the Proton acceptor.

Belongs to the enolase family. Mg(2+) serves as cofactor.

The protein resides in the cytoplasm. The protein localises to the secreted. Its subcellular location is the cell surface. It carries out the reaction (2R)-2-phosphoglycerate = phosphoenolpyruvate + H2O. It participates in carbohydrate degradation; glycolysis; pyruvate from D-glyceraldehyde 3-phosphate: step 4/5. Its function is as follows. Catalyzes the reversible conversion of 2-phosphoglycerate (2-PG) into phosphoenolpyruvate (PEP). It is essential for the degradation of carbohydrates via glycolysis. In Borreliella burgdorferi (strain ZS7) (Borrelia burgdorferi), this protein is Enolase.